A 1559-amino-acid chain; its full sequence is Fatty acid synthase alpha subunit stcJ (1559 aa).

In terms of domain architecture, Carrier spans 68-147 (DTPLTAIFII…AALGEVSLGP (80 aa)). O-(pantetheine 4'-phosphoryl)serine is present on Ser106. The ketoreductase (KR) domain stretch occupies residues 457-693 (NHTYLITGAG…SLLLTPQLAT (237 aa)). In terms of domain architecture, Ketosynthase family 3 (KS3) spans 873–1327 (REVFQEIVLE…QKEAQLVGVH (455 aa)). Cys1058 acts as the For beta-ketoacyl synthase activity in catalysis. Residues 1105–1117 (VRDEQARGREPGE) show a composition bias toward basic and acidic residues. Residues 1105 to 1125 (VRDEQARGREPGEMSRPTAAS) form a disordered region. Active-site for beta-ketoacyl synthase activity residues include His1212 and His1253. Mg(2+) is bound at residue Asp1432. Residues 1432–1434 (DTV), 1480–1490 (EAVFKCLQTVS), 1504–1506 (RVQ), and 1532–1534 (LSY) contribute to the acetyl-CoA site. Ser1533 lines the Mg(2+) pocket.

Belongs to the thiolase-like superfamily. Fungal fatty acid synthetase subunit alpha family. As to quaternary structure, [Alpha(6)beta(6)] hexamers of two multifunctional subunits (alpha and beta).

The catalysed reaction is acetyl-CoA + n malonyl-CoA + 2n NADPH + 4n H(+) = a long-chain-acyl-CoA + n CoA + n CO2 + 2n NADP(+).. It carries out the reaction a fatty acyl-[ACP] + malonyl-[ACP] + H(+) = a 3-oxoacyl-[ACP] + holo-[ACP] + CO2. It catalyses the reaction a (3R)-hydroxyacyl-[ACP] + NADP(+) = a 3-oxoacyl-[ACP] + NADPH + H(+). Its pathway is mycotoxin biosynthesis; sterigmatocystin biosynthesis. Fatty acid synthase alpha subunit; part of the gene cluster that mediates the biosynthesis of sterigmatocystin (ST), a polyketide-derived furanocoumarin which is part of the most toxic and carcinogenic compounds among the known mycotoxins. The first step in the biosynthesis of sterigmatocystin is the production of hexanoate by the fatty acid synthase (FAS) units stcJ and stcK. The polyketide backbone is assembled by the non-reducing polyketide synthase stcA by condensation of the starter hexanoyl-CoA and 7 malonyl-CoA extender units followed by cyclization and release of norsolorinic acid. Norsolorinic acid is the first stable intermediate in the biosynthesis of sterigmatocystin and is converted into averantin (AVN) by the ketoreductase stcE which reduces the hexanoate ketone to an alcohol. Averantin is then oxidized into 5'-hydroxyaverantin (HAVN) by the cytochrome P450 monooxygenase stcF. 5'-hydroxyaverantin is further converted to 5'-oxyaverantin (OAVN) by the 5'-hydroxyaverantin dehydrogenase stcG. The next step is the conversion of OAVN into averufin (AVF) which is catalyzed by a yet to be identified enzyme. The cytochrome P450 monooxygenase stcB and the flavin-binding monooxygenase stcW are both required for the conversion of averufin to 1-hydroxyversicolorone. The esterase stcI probably catalyzes the formation of versiconal hemiacetal acetate from 1-hydroxyversicolorone. The oxydoreductase stcN then probably catalyzes the biosynthetic step from versiconal to versicolorin B (VERB). The next step is performed by the versicolorin B desaturase stcL to produce versicolorin A (VERA). The ketoreductase stcU and the cytochrome P450 monooxygenase stcS are involved in the conversion of versicolorin A to demethylsterigmatocystin. The Baeyer-Villiger oxidas stcQ and the reductase stcR might be involved in the biosynthetic step from versicolorin A to demethylsterigmatocystin. The final step in the biosynthesis of sterigmatocystin is the methylation of demethylsterigmatocystin catalyzed by the methyltransferase stcP. The protein is Fatty acid synthase alpha subunit stcJ of Emericella nidulans (strain FGSC A4 / ATCC 38163 / CBS 112.46 / NRRL 194 / M139) (Aspergillus nidulans).